The chain runs to 348 residues: Putative serine/threonine-protein phosphatase C26H8.05c (348 aa).

Residues aspartate 53, histidine 55, aspartate 81, and asparagine 113 each coordinate Mn(2+). Histidine 114 functions as the Proton donor in the catalytic mechanism. The Mn(2+) site is built by histidine 163 and histidine 237. A disordered region spans residues threonine 259 to aspartate 282. Residues aspartate 269–proline 280 show a composition bias toward low complexity. Serine 272 is subject to Phosphoserine. At leucine 348 the chain carries Leucine methyl ester.

Belongs to the PPP phosphatase family. PP-1 subfamily. The cofactor is Mn(2+).

The protein localises to the cytoplasm. Its subcellular location is the nucleus. The enzyme catalyses O-phospho-L-seryl-[protein] + H2O = L-seryl-[protein] + phosphate. It carries out the reaction O-phospho-L-threonyl-[protein] + H2O = L-threonyl-[protein] + phosphate. This Schizosaccharomyces pombe (strain 972 / ATCC 24843) (Fission yeast) protein is Putative serine/threonine-protein phosphatase C26H8.05c.